Reading from the N-terminus, the 1612-residue chain is DNA (cytosine-5)-methyltransferase PliMCI (1612 aa).

The region spanning 7-101 (CDQVIPPNVR…NGDTKEEASS (95 aa)) is the DMAP1-binding domain. Positions 87-338 (TCSPVNGDTK…TAESKQPPLR (252 aa)) are disordered. Basic and acidic residues predominate over residues 94–110 (DTKEEASSNGKDDEKAE). Residues 115-131 (NGTTSNGSTTNGSSGSS) are compositionally biased toward low complexity. Positions 132 to 142 (KANGHTNGGYV) are enriched in polar residues. Positions 143 to 154 (QSSSQEETGTSQ) are enriched in low complexity. Composition is skewed to basic and acidic residues over residues 193-212 (VLGD…KKDV), 222-232 (EESATPDEKTL), and 260-289 (KKEE…KKEE). The CXXC-type zinc finger occupies 626 to 672 (ASERKKRCGVCEICQAPDCGKCTACKDMIKFGGSGKAKQACKDRRCP). Zn(2+)-binding residues include Cys633, Cys636, Cys639, Cys644, Cys647, Cys650, Cys666, and Cys671. The segment at 677–708 (QEADENDIDEMDNSSNKENKDEKKAKKGRKLE) is disordered. Residues 678–688 (EADENDIDEMD) are compositionally biased toward acidic residues. The span at 691 to 708 (SNKENKDEKKAKKGRKLE) shows a compositional bias: basic and acidic residues. 2 consecutive BAH domains span residues 743-871 (EKIE…EDYE) and 967-1089 (NYRK…EDPP). A disordered region spans residues 1084-1121 (CFEDPPSKSRSTRMKGKGKGKGKGKAKGKIAVEKEEEK). The span at 1093 to 1111 (RSTRMKGKGKGKGKGKAKG) shows a compositional bias: basic residues. In terms of domain architecture, SAM-dependent MTase C5-type spans 1131-1590 (LKCLDVFAGC…MEIKVCLQTK (460 aa)). S-adenosyl-L-methionine contacts are provided by residues 1142 to 1143 (GL), 1160 to 1161 (EK), 1182 to 1183 (DC), and Cys1183. Cys1218 is an active-site residue. Residues Asn1569 and Val1571 each coordinate S-adenosyl-L-methionine.

This sequence belongs to the class I-like SAM-binding methyltransferase superfamily. C5-methyltransferase family.

The protein resides in the nucleus. It catalyses the reaction a 2'-deoxycytidine in DNA + S-adenosyl-L-methionine = a 5-methyl-2'-deoxycytidine in DNA + S-adenosyl-L-homocysteine + H(+). Its function is as follows. Methylates CpG residues. This is DNA (cytosine-5)-methyltransferase PliMCI (DNMT) from Paracentrotus lividus (Common sea urchin).